The primary structure comprises 370 residues: MSNQHTLLISNLLPVGSNISTWWNFGSMLLTCMALQTSTGFFLAIHYTANINLAFSSVTHILRDVPYGWIMQNLHAIGASLFFICIYTHIARGLYYGLYLNKWVWLSGTILLIILMATAFFGYVLPWGQMSFWAATVITNLLTAIPYLGPTLTTWLWGGFSINDPTLTRFFALHFILPFLIISLSSIHIVLLHNEGSNNPLGTNPDIDKIPFHPYHSYKDMLMATTMITMLFITMSFMPNLFNDPENFSKANPLVTPQHIKPEWYFLFAYGILRSIPNKLGGTLALLMSVIILTAPPFTHTSHVRPMTFRPLTQILFWMLIATFITITWTATKPVEPPFITISQMASTXYFLFFIINPILGWIENKIINK.

The next 4 membrane-spanning stretches (helical) occupy residues 25–45, 69–90, 105–125, and 170–190; these read FGSMLLTCMALQTSTGFFLAI, WIMQNLHAIGASLFFICIYTHI, WLSGTILLIILMATAFFGYVL, and FFALHFILPFLIISLSSIHIV. Residues His75 and His89 each coordinate heme b. Heme b-binding residues include His174 and His188. Residue His193 participates in a ubiquinone binding. Helical transmembrane passes span 218-238, 280-300, 312-332, and 339-358; these read YKDMLMATTMITMLFITMSFM, LGGTLALLMSVIILTAPPFTH, LTQILFWMLIATFITITWTAT, and FITISQMASTXYFLFFIINP.

This sequence belongs to the cytochrome b family. The cytochrome bc1 complex contains 3 respiratory subunits (MT-CYB, CYC1 and UQCRFS1), 2 core proteins (UQCRC1 and UQCRC2) and probably 6 low-molecular weight proteins. Heme b is required as a cofactor.

Its subcellular location is the mitochondrion inner membrane. Its function is as follows. Component of the ubiquinol-cytochrome c reductase complex (complex III or cytochrome b-c1 complex) that is part of the mitochondrial respiratory chain. The b-c1 complex mediates electron transfer from ubiquinol to cytochrome c. Contributes to the generation of a proton gradient across the mitochondrial membrane that is then used for ATP synthesis. This is Cytochrome b (MT-CYB) from Micropechis ikaheca (New Guinean small-eyed snake).